The primary structure comprises 352 residues: Decapping nuclease din1 (352 aa).

Substrate is bound by residues arginine 33 and 93-95 (WRG). Glutamate 150 provides a ligand contact to a divalent metal cation. Residues cysteine 182 and glutamate 199 each coordinate substrate. Aspartate 201 is a binding site for a divalent metal cation. Serine 218 carries the phosphoserine modification. Glutamate 239 and leucine 240 together coordinate a divalent metal cation. Substrate contacts are provided by lysine 241 and glutamine 263.

This sequence belongs to the DXO/Dom3Z family. In terms of assembly, interacts with dhp1/Rat1; the interaction is direct, stabilizes dhp1 protein structure and stimulates its exoribonuclease activity. The interaction also stimulates din1 pyrophosphohydrolase activity, probably by recruiting it to mRNA substrates. Requires a divalent metal cation as cofactor.

The protein resides in the nucleus. The enzyme catalyses a 5'-end NAD(+)-phospho-ribonucleoside in mRNA + H2O = a 5'-end phospho-ribonucleoside in mRNA + NAD(+) + H(+). The catalysed reaction is a 5'-end (N(7)-methyl 5'-triphosphoguanosine)-ribonucleoside-ribonucleotide in mRNA + H2O = a (N(7)-methyl 5'-triphosphoguanosine)-nucleoside + a 5'-end phospho-ribonucleoside in mRNA + H(+). It catalyses the reaction a 5'-end triphospho-ribonucleoside in mRNA + H2O = a 5'-end phospho-ribonucleoside in mRNA + diphosphate + H(+). Its function is as follows. Decapping enzyme for NAD-capped RNAs: specifically hydrolyzes the nicotinamide adenine dinucleotide (NAD) cap from a subset of RNAs by removing the entire NAD moiety from the 5'-end of an NAD-capped RNA. The NAD-cap is present at the 5'-end of some RNAs and snoRNAs. In contrast to the canonical 5'-end N7 methylguanosine (m7G) cap, the NAD cap promotes mRNA decay. Also acts as a non-canonical decapping enzyme that removes the entire cap structure of m7G capped or incompletely capped RNAs and mediates their subsequent degradation. Specifically degrades pre-mRNAs with a defective m7G cap and is part of a pre-mRNA capping quality control. Has decapping activity toward incomplete 5'-end m7G cap mRNAs such as unmethylated 5'-end-capped RNA (cap0), while it has no activity toward 2'-O-ribose methylated m7G cap (cap1). Also possesses RNA 5'-pyrophosphohydrolase activity by hydrolyzing the 5'-end triphosphate to release pyrophosphates. Stimulates exoribonuclease activity of dhp1, allowing it to degrade RNAs with stable secondary structure more effectively. The chain is Decapping nuclease din1 from Schizosaccharomyces pombe (strain 972 / ATCC 24843) (Fission yeast).